The sequence spans 671 residues: Solute carrier family 53 member 1 (671 aa).

Residues 1-193 form an important for promoting lysosomal/autophagosomal degradation of PXo bodies following inorganic phosphate (Pi) starvation region; the sequence is MKFAEHLTAH…DIDRLIQETE (193 aa). Residues 1-228 are Cytoplasmic-facing; that stretch reads MKFAEHLTAH…EQQSPWTTFK (228 aa). Residues 2-218 enclose the SPX domain; sequence KFAEHLTAHI…MKRLRVPPLG (217 aa). The tract at residues 152–159 is important for inositol polyphosphate binding; the sequence is KILKKHDK. A helical membrane pass occupies residues 229-253; that stretch reads VGLFSGAFVVLFITVVIAAMFYGFG. Topologically, residues 254-255 are extracellular; it reads EN. The chain crosses the membrane as a helical span at residues 256-287; it reads WRAGMRMFRAPFLIIECLFLWGVNVYGWRSSG. The Cytoplasmic portion of the chain corresponds to 288 to 300; sequence VNHVLIFELDPRN. Residues 301–328 form a helical membrane-spanning segment; sequence HLSEQNIMEVASVFGVIWACCVLSYIFC. Residues 329–334 are Extracellular-facing; sequence DPLGIP. The chain crosses the membrane as a helical span at residues 335–356; the sequence is QYAAPLCLYTLMAAFLLNPTKT. The helical intramembrane region spans 357 to 374; sequence FHHEARFWAIRILIRVIM. Residues 375-379 are Cytoplasmic-facing; it reads APFCF. The discontinuously helical transmembrane segment at 380–413 threads the bilayer; that stretch reads VNFADFWLADQLNSMVPAFLDIPFLICFFGRSPT. Phosphate is bound by residues aspartate 389 and asparagine 392. The Extracellular segment spans residues 414-415; it reads WH. The discontinuously helical transmembrane segment at 416-455 threads the bilayer; sequence KAGKAASHCVEYVSLLHPIVAIMPAYFRFAQCIRRYRDTK. The EXS domain occupies 423–627; sequence HCVEYVSLLH…DCSDQTTILR (205 aa). A topological domain (cytoplasmic) is located at residue glutamate 456. A helical transmembrane segment spans residues 457 to 488; it reads SFPHLVNAAKYATSFFVVIFAHKYHTTTDTYP. Residues lysine 466 and tyrosine 467 each coordinate phosphate. The Extracellular segment spans residues 489-491; it reads LSK. The chain crosses the membrane as a helical span at residues 492-519; that stretch reads ENPWFYCWITAAIFSSCYAYTWDIKMDW. Residues 520–538 lie on the Cytoplasmic side of the membrane; that stretch reads GLFDSKAGDNRFLREEIVY. A discontinuously helical membrane pass occupies residues 539–570; it reads SSTWFYYFGIIEDLILRFSWTLSMSLIEAGYI. 3 residues coordinate phosphate: arginine 555, arginine 586, and arginine 587. A helical membrane pass occupies residues 571-609; sequence EGDVMMTILSPLEVFRRFIWNYFRLENEHLNNVGKFRAV. The Cytoplasmic portion of the chain corresponds to 610 to 671; the sequence is RDISVAPMDC…QGESIEDLCS (62 aa).

This sequence belongs to the SYG1 (TC 2.A.94) family. As to quaternary structure, homodimer. Interacts with the FAR/SIN/STRIPAK complex members Cka and Pp2A-29B. Detected in PXo bodies found in the enterocytes and progenitors of the midgut and in the hindgut, but rarely occur in the Malpighian tubules, crop, brain, muscles and germlines (at protein level).

Its subcellular location is the membrane. The enzyme catalyses phosphate(in) = phosphate(out). Functionally, inorganic ion transporter that mediates phosphate ion export across the cell membrane. Plays a major role in phosphate homeostasis, preventing intracellular phosphate accumulation and possible calcium phosphate precipitation, ultimately preserving calcium signaling. Binds inositol hexakisphosphate (Ins6P) and similar inositol polyphosphates, such as 5-diphospho-inositol pentakisphosphate (5-InsP7), which are important intracellular signaling molecules involved in regulation of phosphate flux. In enterocytes and differentiating progenitors of the gut, promotes the biogenesis and maintenance of organelles called PXo bodies that store intracellular inorganic phosphate (Pi), and also regulates Cka-JNK mediated tissue homeostasis in response to Pi availability in these tissues. Under conditions of adequate Pi, transports Pi into PXo bodies which convert and store the Pi in the form of phospholipids. It also inhibits Cka at the post-transcriptional level to prevent Cka-bsk/JNK mediated cell proliferation. Upon Pi starvation, Pxo expression is down-regulated resulting in the PXo bodies decreasing in phospholipid content until they undergo lysosomal/autophagosomal degradation and release the stored Pi back into the cytosol for use by the cell. Decrease in Pxo expression also activates the Cka protein, which moves to the nucleus to activate bsk/JNK which then induces nearby progenitor cells to proliferate and form new absorptive cells, probably helping the organism to cope with the nutrient deficiency by maximizing absorption of dietary Pi. This chain is Solute carrier family 53 member 1, found in Drosophila melanogaster (Fruit fly).